A 225-amino-acid polypeptide reads, in one-letter code: Chlorosome protein J (225 aa).

The 2Fe-2S ferredoxin-type domain occupies Met-1–Lys-95. [2Fe-2S] cluster-binding residues include Cys-33, Cys-39, Cys-42, and Cys-77.

[2Fe-2S] cluster serves as cofactor.

Its subcellular location is the chlorosome. Functionally, could play a direct role in the oxidation or reduction of the quenching species formed in the chlorosome. In Chlorobaculum tepidum (strain ATCC 49652 / DSM 12025 / NBRC 103806 / TLS) (Chlorobium tepidum), this protein is Chlorosome protein J (csmJ).